A 185-amino-acid chain; its full sequence is ATP synthase subunit delta, chloroplastic (185 aa).

It belongs to the ATPase delta chain family. In terms of assembly, F-type ATPases have 2 components, F(1) - the catalytic core - and F(0) - the membrane proton channel. F(1) has five subunits: alpha(3), beta(3), gamma(1), delta(1), epsilon(1). CF(0) has four main subunits: a(1), b(1), b'(1) and c(10-14). The alpha and beta chains form an alternating ring which encloses part of the gamma chain. F(1) is attached to F(0) by a central stalk formed by the gamma and epsilon chains, while a peripheral stalk is formed by the delta, b and b' chains.

The protein resides in the plastid. It is found in the chloroplast thylakoid membrane. Its function is as follows. F(1)F(0) ATP synthase produces ATP from ADP in the presence of a proton or sodium gradient. F-type ATPases consist of two structural domains, F(1) containing the extramembraneous catalytic core and F(0) containing the membrane proton channel, linked together by a central stalk and a peripheral stalk. During catalysis, ATP synthesis in the catalytic domain of F(1) is coupled via a rotary mechanism of the central stalk subunits to proton translocation. This protein is part of the stalk that links CF(0) to CF(1). It either transmits conformational changes from CF(0) to CF(1) or is implicated in proton conduction. The sequence is that of ATP synthase subunit delta, chloroplastic from Guillardia theta (Cryptophyte).